Here is a 559-residue protein sequence, read N- to C-terminus: DNA ligase (559 aa).

Glutamate 231 is an ATP binding site. The active-site N6-AMP-lysine intermediate is the lysine 233. The ATP site is built by arginine 238 and glutamate 285. Mg(2+) contacts are provided by glutamate 285 and glutamate 379. The ATP site is built by lysine 384 and lysine 399.

The protein belongs to the ATP-dependent DNA ligase family. As to quaternary structure, interacts with host TOP2A and TOP2B. The cofactor is Mg(2+).

It localises to the host cytoplasm. It catalyses the reaction ATP + (deoxyribonucleotide)n-3'-hydroxyl + 5'-phospho-(deoxyribonucleotide)m = (deoxyribonucleotide)n+m + AMP + diphosphate.. In terms of biological role, DNA ligase that seals nicks in double-stranded DNA during DNA replication, DNA recombination and DNA repair. Recruits cellular topoisomerase II to sites of viral replication and assembly. This chain is DNA ligase (OPG180), found in Monkeypox virus.